The chain runs to 437 residues: MLQGPRALASAAGQTPKVVPAMSPTELWPSGLSSPQLCPATATYYTPLYPQTAPPAAAPGTCLDATPHGPEGQVVRCLPAGRLPAKRKLDLEGIGRPVVPEFPTPKGKCIRVDGLPSPKTPKSPGEKTRYDTSLGLLTKKFIYLLSESEDGVLDLNWAAEVLDVQKRRIYDITNVLEGIQLIRKKAKNNIQWVGRGMFEDPTRPGKQQQLGQELKELMNTEQALDQLIQSCSLSFKHLTEDKANKRLAYVTYQDIRAVGNFKEQTVIAVKAPPQTRLEVPDRTEDNLQIYLKSTQGPIEVYLCPEEVQEPDSPSEEPLPSTSTLCPSPDSAQPSSSTDPSIMEPTASSVPAPAPTPQQAPPPPSLVPLEATDSLLELPHPLLQQTEDQFLSPTLACSSPLISFSPSLDQDDYLWGLEAGEGISDLFDSYDLGDLLIN.

The interval 65-105 (ATPHGPEGQVVRCLPAGRLPAKRKLDLEGIGRPVVPEFPTP) is cyclin A/CDK2 binding. A DNA-binding region spans residues 107–196 (GKCIRVDGLP…KNNIQWVGRG (90 aa)). The tract at residues 155–176 (LNWAAEVLDVQKRRIYDITNVL) is leucine-zipper. A DEF box motif is present at residues 160 to 196 (EVLDVQKRRIYDITNVLEGIQLIRKKAKNNIQWVGRG). The dimerization stretch occupies residues 197 to 289 (MFEDPTRPGK…PDRTEDNLQI (93 aa)). Residues 307-368 (VQEPDSPSEE…APPPPSLVPL (62 aa)) form a disordered region. Over residues 315-330 (EEPLPSTSTLCPSPDS) the composition is skewed to low complexity. Residues 351 to 365 (APAPTPQQAPPPPSL) show a composition bias toward pro residues. The tract at residues 359–437 (APPPPSLVPL…SYDLGDLLIN (79 aa)) is transactivation. Residues 410 to 427 (DDYLWGLEAGEGISDLFD) form a retinoblastoma protein binding region.

It belongs to the E2F/DP family. In terms of assembly, component of the DRTF1/E2F transcription factor complex. Forms heterodimers with DP family members. The E2F2 complex binds specifically hypophosphorylated retinoblastoma protein RB1. During the cell cycle, RB1 becomes phosphorylated in mid-to-late G1 phase, detaches from the DRTF1/E2F complex, rendering E2F transcriptionally active. Viral oncoproteins, notably E1A, T-antigen and HPV E7, are capable of sequestering RB1, thus releasing the active complex. Binds EAPP. In terms of processing, phosphorylated by CDK2 and cyclin A-CDK2 in the S-phase. In terms of tissue distribution, highest level of expression is found in placenta, low levels are found in lung. Found as well in many immortalized cell lines derived from tumor samples.

The protein resides in the nucleus. Functionally, transcription activator that binds DNA cooperatively with DP proteins through the E2 recognition site, 5'-TTTC[CG]CGC-3' found in the promoter region of a number of genes whose products are involved in cell cycle regulation or in DNA replication. The DRTF1/E2F complex functions in the control of cell-cycle progression from g1 to s phase. E2F2 binds specifically to RB1 in a cell-cycle dependent manner. This chain is Transcription factor E2F2 (E2F2), found in Homo sapiens (Human).